The chain runs to 264 residues: Cell division protein FtsQ (264 aa).

Residues 1–24 (MAGPTTAERGARQQESSGPPRVRR) are disordered. At 1 to 32 (MAGPTTAERGARQQESSGPPRVRRFRPPRLRT) the chain is on the cytoplasmic side. Residues 33–53 (IIILAVALVLVAGGTVWVLYG) traverse the membrane as a helical segment. Residues 54–264 (SNWTRLERVS…VATAPASSGS (211 aa)) are Extracellular-facing. The region spanning 57-126 (TRLERVSVSG…HGIGLKVTER (70 aa)) is the POTRA domain.

The protein belongs to the FtsQ/DivIB family. FtsQ subfamily.

Its subcellular location is the cell membrane. Essential cell division protein. In Streptomyces coelicolor (strain ATCC BAA-471 / A3(2) / M145), this protein is Cell division protein FtsQ.